Consider the following 467-residue polypeptide: ATP-dependent protease ATPase subunit HslU (467 aa).

Residues Ile-18, 60 to 65 (GVGKTE), Asp-280, Glu-345, and Arg-417 contribute to the ATP site.

This sequence belongs to the ClpX chaperone family. HslU subfamily. A double ring-shaped homohexamer of HslV is capped on each side by a ring-shaped HslU homohexamer. The assembly of the HslU/HslV complex is dependent on binding of ATP.

It localises to the cytoplasm. ATPase subunit of a proteasome-like degradation complex; this subunit has chaperone activity. The binding of ATP and its subsequent hydrolysis by HslU are essential for unfolding of protein substrates subsequently hydrolyzed by HslV. HslU recognizes the N-terminal part of its protein substrates and unfolds these before they are guided to HslV for hydrolysis. The sequence is that of ATP-dependent protease ATPase subunit HslU from Lactobacillus helveticus (strain DPC 4571).